A 176-amino-acid chain; its full sequence is Ribosome maturation factor RimM (176 aa).

The PRC barrel domain occupies 93–166 (EGEYYHADLI…RVVIEMPGEI (74 aa)).

It belongs to the RimM family. Binds ribosomal protein uS19.

The protein localises to the cytoplasm. Its function is as follows. An accessory protein needed during the final step in the assembly of 30S ribosomal subunit, possibly for assembly of the head region. Essential for efficient processing of 16S rRNA. May be needed both before and after RbfA during the maturation of 16S rRNA. It has affinity for free ribosomal 30S subunits but not for 70S ribosomes. This is Ribosome maturation factor RimM from Rhodopseudomonas palustris (strain BisA53).